A 335-amino-acid polypeptide reads, in one-letter code: Transmembrane protein 120B-A (335 aa).

The stretch at 1 to 40 (MSLQKCQEEWSEIEKEFQQLQETHKVYKQKLEELNSLQNL) forms a coiled coil. A run of 6 helical transmembrane segments spans residues 100–122 (GLYL…AKFA), 130–150 (FKLY…FVLN), 157–177 (VFNF…SILI), 193–213 (VSTF…YQIF), 268–288 (FLLP…ITLF), and 300–320 (QVFV…LTTL).

It belongs to the TMEM120 family.

It localises to the nucleus inner membrane. Functionally, necessary for efficient adipogenesis. Does not show ion channel activity. The sequence is that of Transmembrane protein 120B-A (tmem120b-a) from Xenopus laevis (African clawed frog).